The primary structure comprises 283 residues: MMTHWPSPAKLNLFLYITGQRADGYHTLQTLFQFLDYGDTLHIEPRHDGEIHLLTPVNGVENEDNLIVRAARLLMKVASESGRLPAGSGADISIEKRLPMGGGLGGGSSNAATVLVALNHLWQCGLSIDELATLGLTLGADVPVFVRGHAAFAEGVGEILTPVNPPEKWYLVAPPGVSLPTPVIFKDPQLPRNTPKRSIDTLLKCEFSNDCEVIARKRFREVDAALSWLLEYAPSRLTGTGACVFAEFDTESCARQVLEQAPEWLNAFVAKGVNLSPLHRELL.

K10 is an active-site residue. 99–109 (PMGGGLGGGSS) is a binding site for ATP. The active site involves D141.

Belongs to the GHMP kinase family. IspE subfamily. As to quaternary structure, homodimer.

It carries out the reaction 4-CDP-2-C-methyl-D-erythritol + ATP = 4-CDP-2-C-methyl-D-erythritol 2-phosphate + ADP + H(+). It functions in the pathway isoprenoid biosynthesis; isopentenyl diphosphate biosynthesis via DXP pathway; isopentenyl diphosphate from 1-deoxy-D-xylulose 5-phosphate: step 3/6. In terms of biological role, catalyzes the phosphorylation of the position 2 hydroxy group of 4-diphosphocytidyl-2C-methyl-D-erythritol. This is 4-diphosphocytidyl-2-C-methyl-D-erythritol kinase from Salmonella choleraesuis (strain SC-B67).